The primary structure comprises 1099 residues: Exonuclease/helicase subunit RexB (1099 aa).

Positions 766, 1056, 1059, and 1065 each coordinate [4Fe-4S] cluster.

It belongs to the helicase family. AddB/RexB type 2 subfamily. Heterodimer of RexA (AddA) and RexB. Mg(2+) is required as a cofactor. Requires [4Fe-4S] cluster as cofactor.

Functionally, the heterodimer acts both as an ATP-dependent DNA helicase and an ATP-dependent, dual-direction single-stranded exonuclease. Recognizes the L.lactis chi site (5'-GCGCGTG-3'), which stimulates homologous recombination. This subunit has 5'-&gt;3' exonuclease activity. The heterodimer acts as both an ATP-dependent DNA helicase and an ATP-dependent, dual-direction single-stranded exonuclease. Recognizes the chi site generating a DNA molecule suitable for the initiation of homologous recombination. This subunit has 5' -&gt; 3' nuclease activity but not helicase activity. This is Exonuclease/helicase subunit RexB from Lactococcus lactis subsp. cremoris (strain MG1363).